The primary structure comprises 199 residues: dITP/XTP pyrophosphatase (199 aa).

Substrate is bound at residue 7-12 (TTNLHK). 2 residues coordinate Mg(2+): Glu41 and Asp70. Asp70 (proton acceptor) is an active-site residue. Substrate-binding positions include Ser71, 154 to 157 (FGYD), Lys177, and 182 to 183 (HR).

Belongs to the HAM1 NTPase family. As to quaternary structure, homodimer. It depends on Mg(2+) as a cofactor.

The enzyme catalyses XTP + H2O = XMP + diphosphate + H(+). The catalysed reaction is dITP + H2O = dIMP + diphosphate + H(+). It carries out the reaction ITP + H2O = IMP + diphosphate + H(+). Its function is as follows. Pyrophosphatase that catalyzes the hydrolysis of nucleoside triphosphates to their monophosphate derivatives, with a high preference for the non-canonical purine nucleotides XTP (xanthosine triphosphate), dITP (deoxyinosine triphosphate) and ITP. Seems to function as a house-cleaning enzyme that removes non-canonical purine nucleotides from the nucleotide pool, thus preventing their incorporation into DNA/RNA and avoiding chromosomal lesions. In Protochlamydia amoebophila (strain UWE25), this protein is dITP/XTP pyrophosphatase.